We begin with the raw amino-acid sequence, 265 residues long: MSWEGFKKAINRAGHSVIIKNVDKTIDKEYDMEERRYKVLQRAGEALQKEAKGFLDSLRAVTASQTTIAEVISNLYDDSKYVAGGGYNVGNYYLQCVQDFDSETVKQLDGPLRETVLDPITKFSTYFKEIEEAIKKRDHKKQDFDAAKAKVRRLVDKPAKDASKLPRAEKELSLAKDIFENLNNQLKTELPQLVSLRVPYFDPSFEALIKIQLRFCTDGYTRLAQIQQYLDQQSRDDYANGLLDTKIEELLGQMTSLDICALGIK.

Residues 15–239 form the BAR domain; sequence HSVIIKNVDK…LDQQSRDDYA (225 aa). Residues 126–193 are a coiled coil; the sequence is YFKEIEEAIK…NQLKTELPQL (68 aa).

The protein localises to the cytoplasm. The protein resides in the cytoskeleton. Component of a cytoskeletal structure that is required for the formation of endocytic vesicles at the plasma membrane level. The sequence is that of Reduced viability upon starvation protein 161 (RVS161) from Saccharomyces cerevisiae (strain ATCC 204508 / S288c) (Baker's yeast).